Reading from the N-terminus, the 265-residue chain is 3-methyl-2-oxobutanoate hydroxymethyltransferase (265 aa).

Aspartate 45 and aspartate 84 together coordinate Mg(2+). 3-methyl-2-oxobutanoate is bound by residues aspartate 45–serine 46, aspartate 84, and lysine 112. Glutamate 114 contacts Mg(2+). Glutamate 181 (proton acceptor) is an active-site residue.

It belongs to the PanB family. In terms of assembly, homodecamer; pentamer of dimers. Requires Mg(2+) as cofactor.

It localises to the cytoplasm. The catalysed reaction is 3-methyl-2-oxobutanoate + (6R)-5,10-methylene-5,6,7,8-tetrahydrofolate + H2O = 2-dehydropantoate + (6S)-5,6,7,8-tetrahydrofolate. Its pathway is cofactor biosynthesis; (R)-pantothenate biosynthesis; (R)-pantoate from 3-methyl-2-oxobutanoate: step 1/2. Functionally, catalyzes the reversible reaction in which hydroxymethyl group from 5,10-methylenetetrahydrofolate is transferred onto alpha-ketoisovalerate to form ketopantoate. This is 3-methyl-2-oxobutanoate hydroxymethyltransferase from Yersinia pestis bv. Antiqua (strain Antiqua).